The chain runs to 405 residues: Glucose-1-phosphate adenylyltransferase 1 (405 aa).

Residues Y96, G161, E176–K177, and S194 each bind alpha-D-glucose 1-phosphate.

Belongs to the bacterial/plant glucose-1-phosphate adenylyltransferase family. In terms of assembly, homotetramer.

The enzyme catalyses alpha-D-glucose 1-phosphate + ATP + H(+) = ADP-alpha-D-glucose + diphosphate. It functions in the pathway glycan biosynthesis; glycogen biosynthesis. Its function is as follows. Involved in the biosynthesis of ADP-glucose, a building block required for the elongation reactions to produce glycogen. Catalyzes the reaction between ATP and alpha-D-glucose 1-phosphate (G1P) to produce pyrophosphate and ADP-Glc. This chain is Glucose-1-phosphate adenylyltransferase 1, found in Vibrio parahaemolyticus serotype O3:K6 (strain RIMD 2210633).